The sequence spans 188 residues: Threonylcarbamoyl-AMP synthase (188 aa).

One can recognise a YrdC-like domain in the interval Gln-3–Gln-188.

This sequence belongs to the SUA5 family. TsaC subfamily.

The protein resides in the cytoplasm. It catalyses the reaction L-threonine + hydrogencarbonate + ATP = L-threonylcarbamoyladenylate + diphosphate + H2O. Its function is as follows. Required for the formation of a threonylcarbamoyl group on adenosine at position 37 (t(6)A37) in tRNAs that read codons beginning with adenine. Catalyzes the conversion of L-threonine, HCO(3)(-)/CO(2) and ATP to give threonylcarbamoyl-AMP (TC-AMP) as the acyladenylate intermediate, with the release of diphosphate. This is Threonylcarbamoyl-AMP synthase from Shewanella baltica (strain OS155 / ATCC BAA-1091).